The following is a 215-amino-acid chain: Ribose-5-phosphate isomerase A (215 aa).

Substrate is bound by residues 26 to 29 (TGST), 79 to 82 (DGAD), and 92 to 95 (KGGG). Glu-101 functions as the Proton acceptor in the catalytic mechanism. Lys-119 provides a ligand contact to substrate.

It belongs to the ribose 5-phosphate isomerase family. As to quaternary structure, homodimer.

The catalysed reaction is aldehydo-D-ribose 5-phosphate = D-ribulose 5-phosphate. The protein operates within carbohydrate degradation; pentose phosphate pathway; D-ribose 5-phosphate from D-ribulose 5-phosphate (non-oxidative stage): step 1/1. Its function is as follows. Catalyzes the reversible conversion of ribose-5-phosphate to ribulose 5-phosphate. The protein is Ribose-5-phosphate isomerase A of Xylella fastidiosa (strain Temecula1 / ATCC 700964).